Reading from the N-terminus, the 142-residue chain is Hemoglobin subunit alpha (142 aa).

S1 is modified (N-acetylserine). The Globin domain occupies S1–R142. Residue H59 participates in O2 binding. H88 is a binding site for heme b.

It belongs to the globin family. Heterotetramer of two alpha chains and two beta chains. In terms of tissue distribution, red blood cells.

Involved in oxygen transport from gills to the various peripheral tissues. This Carassius auratus (Goldfish) protein is Hemoglobin subunit alpha (hba).